Here is a 215-residue protein sequence, read N- to C-terminus: Probable transaldolase (215 aa).

K83 serves as the catalytic Schiff-base intermediate with substrate.

Belongs to the transaldolase family. Type 3B subfamily.

The protein localises to the cytoplasm. It catalyses the reaction D-sedoheptulose 7-phosphate + D-glyceraldehyde 3-phosphate = D-erythrose 4-phosphate + beta-D-fructose 6-phosphate. It participates in carbohydrate degradation; pentose phosphate pathway; D-glyceraldehyde 3-phosphate and beta-D-fructose 6-phosphate from D-ribose 5-phosphate and D-xylulose 5-phosphate (non-oxidative stage): step 2/3. In terms of biological role, transaldolase is important for the balance of metabolites in the pentose-phosphate pathway. This Methanococcus maripaludis (strain C6 / ATCC BAA-1332) protein is Probable transaldolase.